We begin with the raw amino-acid sequence, 886 residues long: Phycobiliprotein ApcE (886 aa).

(2R,3E)-phycocyanobilin is bound at residue C187. PBS-linker domains lie at 244-424, 496-678, and 695-876; these read DLQG…FRKV, QVRP…ISSK, and NDIQ…SVVV.

Belongs to the phycobilisome linker protein family. Post-translationally, contains one covalently linked bilin chromophore. This protein autochromophorylates (Potential).

Its subcellular location is the plastid. It localises to the chloroplast thylakoid membrane. Functionally, this protein is postulated to act both as terminal energy acceptor and as a linker polypeptide that stabilizes the phycobilisome architecture. May have intrinsic bilin lyase activity. The chain is Phycobiliprotein ApcE (apcE) from Porphyra purpurea (Red seaweed).